The sequence spans 89 residues: Small ribosomal subunit protein uS15 (89 aa).

The protein belongs to the universal ribosomal protein uS15 family. Part of the 30S ribosomal subunit. Forms a bridge to the 50S subunit in the 70S ribosome, contacting the 23S rRNA.

One of the primary rRNA binding proteins, it binds directly to 16S rRNA where it helps nucleate assembly of the platform of the 30S subunit by binding and bridging several RNA helices of the 16S rRNA. Functionally, forms an intersubunit bridge (bridge B4) with the 23S rRNA of the 50S subunit in the ribosome. The protein is Small ribosomal subunit protein uS15 of Shewanella loihica (strain ATCC BAA-1088 / PV-4).